Here is a 748-residue protein sequence, read N- to C-terminus: Disintegrin and metalloproteinase domain-containing protein 10 (748 aa).

A signal peptide spans 1–19 (MVLLRVLILLLSWAAGMGG). A propeptide spanning residues 20 to 213 (QYGNPLNKYI…NGPELLRKKR (194 aa)) is cleaved from the precursor. At 20–672 (QYGNPLNKYI…SPELYENIAE (653 aa)) the chain is on the extracellular side. The short motif at 171–178 (GGCADHSV) is the Cysteine switch element. Cys173 lines the Zn(2+) pocket. The Peptidase M12B domain maps to 220-456 (NTCQLYIQTD…KRNNCFVESG (237 aa)). 17 disulfide bridges follow: Cys222–Cys313, Cys344–Cys451, Cys399–Cys435, Cys460–Cys495, Cys471–Cys484, Cys473–Cys479, Cys483–Cys515, Cys503–Cys511, Cys510–Cys536, Cys524–Cys543, Cys530–Cys562, Cys555–Cys567, Cys572–Cys598, Cys580–Cys607, Cys582–Cys597, Cys594–Cys639, and Cys632–Cys645. 2 N-linked (GlcNAc...) asparagine glycosylation sites follow: Asn267 and Asn278. His383 contacts Zn(2+). Glu384 is a catalytic residue. Zn(2+) is bound by residues His387 and His393. Asn439 is a glycosylation site (N-linked (GlcNAc...) asparagine). Positions 457 to 551 (QPICGNGMVE…LCPASDPKPN (95 aa)) constitute a Disintegrin domain. An N-linked (GlcNAc...) asparagine glycan is attached at Asn551. The helical transmembrane segment at 673–693 (WIVAHWWAVLLMGIALIMLMA) threads the bilayer. The Cytoplasmic portion of the chain corresponds to 694–748 (GFIKICSVHTPSSNPKLPPPKPLPGTLKRRRPPQPIQQPQRQRPRESYQMGHMRR). The interval 704–748 (PSSNPKLPPPKPLPGTLKRRRPPQPIQQPQRQRPRESYQMGHMRR) is disordered. An SH3-binding motif is present at residues 708–715 (PKLPPPKP). At Thr719 the chain carries Phosphothreonine; by FAM20C. The short motif at 722–728 (RRRPPQP) is the SH3-binding element. The tract at residues 734-748 (RQRPRESYQMGHMRR) is interaction with AP2A1, AP2A2 and AP2M1.

Forms a ternary EFNA5-EPHA3-ADAM10 complex mediating EFNA5 extracellular domain shedding by ADAM10 which regulates the EFNA5-EPHA3 complex internalization and function, the cleavage occurs in trans, with ADAM10 and its substrate being on the membranes of opposing cells. Interacts with the clathrin adapter AP2 complex subunits AP2A1, AP2A2, AP2B1, and AP2M1; this interaction facilitates ADAM10 endocytosis from the plasma membrane during long-term potentiation in hippocampal neurons. Forms a ternary complex composed of ADAM10, EPHA4 and CADH1; within the complex, ADAM10 cleaves CADH1 which disrupts adherens junctions. Interacts with EPHA2. Interacts with NGF in a divalent cation-dependent manner. Interacts with TSPAN14; the interaction promotes ADAM10 maturation and cell surface expression. Interacts with TSPAN5, TSPAN10, TSPAN14, TSPAN15, TSPAN17 and TSPAN33; these interactions regulate ADAM10 substrate specificity, endocytosis and turnover. Interacts (via extracellular domain) with TSPAN33 (via extracellular domain) and (via cytoplasmic domain) with AFDN; interaction with TSPAN33 allows the docking of ADAM10 to zonula adherens through a PDZ11-dependent interaction between TSPAN33 and PLEKHA7 while interaction with AFDN locks ADAM10 at zonula adherens. Interacts with DLG1; this interaction recruits ADAM10 to the cell membrane during long-term depression in hippocampal neurons. Interacts (via extracellular domain) with BACE1 (via extracellular domain). Interacts with FAM171A1. In terms of assembly, (Microbial infection) Interacts with S.aureus hly; this interaction is necessary for toxin pore formation, disruption of focal adhesions and S.aureus hly-mediated cytotoxicity. Zn(2+) is required as a cofactor. In terms of processing, the precursor is cleaved by furin and PCSK7. As to expression, expressed in the brain (at protein level). Expressed in spleen, lymph node, thymus, peripheral blood leukocyte, bone marrow, cartilage, chondrocytes and fetal liver.

It localises to the cell membrane. The protein resides in the golgi apparatus membrane. It is found in the cytoplasmic vesicle. Its subcellular location is the clathrin-coated vesicle. The protein localises to the cell projection. It localises to the axon. The protein resides in the dendrite. It is found in the cell junction. Its subcellular location is the adherens junction. The protein localises to the cytoplasm. It catalyses the reaction Endopeptidase of broad specificity.. With respect to regulation, catalytically inactive when the propeptide is intact and associated with the mature enzyme. The disintegrin and cysteine-rich regions modulate access of substrates to exerts an inhibitory effect on the cleavage of ADAM10 substrates. In terms of biological role, transmembrane metalloprotease which mediates the ectodomain shedding of a myriad of transmembrane proteins, including adhesion proteins, growth factor precursors and cytokines being essential for development and tissue homeostasis. Associates with six members of the tetraspanin superfamily TspanC8 which regulate its exit from the endoplasmic reticulum and its substrate selectivity. Cleaves the membrane-bound precursor of TNF-alpha at '76-Ala-|-Val-77' to its mature soluble form. Responsible for the proteolytical release of soluble JAM3 from endothelial cells surface. Responsible for the proteolytic release of several other cell-surface proteins, including heparin-binding epidermal growth-like factor, ephrin-A2, CD44, CDH2 and for constitutive and regulated alpha-secretase cleavage of amyloid precursor protein (APP). Contributes to the normal cleavage of the cellular prion protein. Involved in the cleavage of the adhesion molecule L1 at the cell surface and in released membrane vesicles, suggesting a vesicle-based protease activity. Also controls the proteolytic processing of Notch and mediates lateral inhibition during neurogenesis. Required for the development of type 1 transitional B cells into marginal zone B cells, probably by cleaving Notch. Responsible for the FasL ectodomain shedding and for the generation of the remnant ADAM10-processed FasL (FasL APL) transmembrane form. Also cleaves the ectodomain of the integral membrane proteins CORIN and ITM2B. Mediates the proteolytic cleavage of LAG3, leading to release the secreted form of LAG3. Mediates the proteolytic cleavage of IL6R and IL11RA, leading to the release of secreted forms of IL6R and IL11RA. Enhances the cleavage of CHL1 by BACE1. Cleaves NRCAM. Cleaves TREM2, resulting in shedding of the TREM2 ectodomain. Involved in the development and maturation of glomerular and coronary vasculature. During development of the cochlear organ of Corti, promotes pillar cell separation by forming a ternary complex with CADH1 and EPHA4 and cleaving CADH1 at adherens junctions. May regulate the EFNA5-EPHA3 signaling. Regulates leukocyte transmigration as a sheddase for the adherens junction protein VE-cadherin/CDH5 in endothelial cells. (Microbial infection) Promotes the cytotoxic activity of S.aureus hly by binding to the toxin at zonula adherens and promoting formation of toxin pores. In Homo sapiens (Human), this protein is Disintegrin and metalloproteinase domain-containing protein 10.